The following is a 57-amino-acid chain: NADH dehydrogenase [ubiquinone] 1 beta subcomplex subunit 1 (57 aa).

A helical transmembrane segment spans residues 10–26; that stretch reads HWVHVLVPMGFVFGYYL.

This sequence belongs to the complex I NDUFB1 subunit family. In terms of assembly, complex I is composed of 45 different subunits.

It is found in the mitochondrion inner membrane. Its function is as follows. Accessory subunit of the mitochondrial membrane respiratory chain NADH dehydrogenase (Complex I) that is believed not to be involved in catalysis. Complex I functions in the transfer of electrons from NADH to the respiratory chain. The immediate electron acceptor for the enzyme is believed to be ubiquinone. The polypeptide is NADH dehydrogenase [ubiquinone] 1 beta subcomplex subunit 1 (NDUFB1) (Bos taurus (Bovine)).